Consider the following 149-residue polypeptide: MEQTFIMIKPDGVQRGLIGEVICRFEKKGFTLKGLKLISVERSFAEKHYEDLSSKSFFSGLVDYIVSGPVVAMIWEGKNVVLTGRKIIGATNPAASEPGTIRGDFAIDIGRNVIHGSDSVESARKEIALWFPDGPVNWQSSVHPWVYET.

Met1 bears the N-acetylmethionine mark. Residues Lys9, Phe57, Arg85, Thr91, Arg102, and Asn112 each contribute to the ATP site. Catalysis depends on His115, which acts as the Pros-phosphohistidine intermediate.

This sequence belongs to the NDK family. As to quaternary structure, interacts with CAT1, CAT2 and CAT3. Requires Mg(2+) as cofactor.

The protein resides in the peroxisome. The protein localises to the nucleus. It localises to the cytoplasm. It catalyses the reaction a 2'-deoxyribonucleoside 5'-diphosphate + ATP = a 2'-deoxyribonucleoside 5'-triphosphate + ADP. The enzyme catalyses a ribonucleoside 5'-diphosphate + ATP = a ribonucleoside 5'-triphosphate + ADP. Functionally, major role in the synthesis of nucleoside triphosphates other than ATP. The ATP gamma phosphate is transferred to the NDP beta phosphate via a ping-pong mechanism, using a phosphorylated active-site intermediate. Plays a role in response to reactive oxygen species (ROS) stress. This chain is Nucleoside diphosphate kinase 1 (NDK1), found in Arabidopsis thaliana (Mouse-ear cress).